Reading from the N-terminus, the 164-residue chain is Large ribosomal subunit protein uL11 (164 aa).

It belongs to the universal ribosomal protein uL11 family. In terms of assembly, part of the ribosomal stalk of the 50S ribosomal subunit. Interacts with L10 and the large rRNA to form the base of the stalk. L10 forms an elongated spine to which L12 dimers bind in a sequential fashion forming a multimeric L10(L12)X complex.

Forms part of the ribosomal stalk which helps the ribosome interact with GTP-bound translation factors. The polypeptide is Large ribosomal subunit protein uL11 (Pyrococcus furiosus (strain ATCC 43587 / DSM 3638 / JCM 8422 / Vc1)).